The chain runs to 402 residues: 4-hydroxy-3-methylbut-2-en-1-yl diphosphate synthase (ferredoxin) (402 aa).

[4Fe-4S] cluster-binding residues include Cys311, Cys314, Cys345, and Glu352.

The protein belongs to the IspG family. Requires [4Fe-4S] cluster as cofactor.

It catalyses the reaction (2E)-4-hydroxy-3-methylbut-2-enyl diphosphate + 2 oxidized [2Fe-2S]-[ferredoxin] + H2O = 2-C-methyl-D-erythritol 2,4-cyclic diphosphate + 2 reduced [2Fe-2S]-[ferredoxin] + H(+). It functions in the pathway isoprenoid biosynthesis; isopentenyl diphosphate biosynthesis via DXP pathway; isopentenyl diphosphate from 1-deoxy-D-xylulose 5-phosphate: step 5/6. Functionally, converts 2C-methyl-D-erythritol 2,4-cyclodiphosphate (ME-2,4cPP) into 1-hydroxy-2-methyl-2-(E)-butenyl 4-diphosphate, using ferredoxin I (PetF) as the reducing agent. This chain is 4-hydroxy-3-methylbut-2-en-1-yl diphosphate synthase (ferredoxin), found in Thermosynechococcus vestitus (strain NIES-2133 / IAM M-273 / BP-1).